Here is a 267-residue protein sequence, read N- to C-terminus: Hydroxyethylthiazole kinase 2 (267 aa).

Residue Met-41 coordinates substrate. ATP contacts are provided by Lys-116 and Thr-166. Gly-193 provides a ligand contact to substrate.

The protein belongs to the Thz kinase family. Requires Mg(2+) as cofactor.

The catalysed reaction is 5-(2-hydroxyethyl)-4-methylthiazole + ATP = 4-methyl-5-(2-phosphooxyethyl)-thiazole + ADP + H(+). Its pathway is cofactor biosynthesis; thiamine diphosphate biosynthesis; 4-methyl-5-(2-phosphoethyl)-thiazole from 5-(2-hydroxyethyl)-4-methylthiazole: step 1/1. Its function is as follows. Catalyzes the phosphorylation of the hydroxyl group of 4-methyl-5-beta-hydroxyethylthiazole (THZ). The polypeptide is Hydroxyethylthiazole kinase 2 (Streptococcus pneumoniae (strain 70585)).